The chain runs to 1936 residues: MFANKTEKRNVQNKHKYIDGGKLSKDKDKIDETGSNTEKYIKIDNASKKEIIIFSKNSELIDNKKIKEINENGYNKLKINTHDEFNITKKKMKNSNDNIIYNSPNSKIKVVSNNNFKDRKKGMNHKKKKGISINQITLFKIHNYIYKTFVFLLCLFIVILVLYASIDISQNYGPIIILYIIMLEFGSMLISYILLQFPFFYLILKNMFTRTSNINKYSHQYSPLYYENPSDSDDKDSIDVKRRETKQRRKTFGFFNLNNIDHNKYSIKKNILPTKLKVYNKEESDKYEYGNLNHVLNTNLSNTKSRSADEAENYIIEDTNMNHNGENVNNKSKKGNQPIKIRNHKRENIYLDDCNMWIRNSIKKSRVKGNFNLTRSLSFNIKLSENNVILNDSRNIDNLRIYLNHRSSKYEKKKNQIKPLKLFAYNKYAPLTFSTPYKYNVPSDIFKTNTGESKILSAEISESSNDVNGLLHKNNDKSYSEEKYHLDKRKTDNEFYTGKSAILFSNKHTKQYMRKKTFMYDDLDSLNIYKNKKHNRKNKKKSIFCKIKCFNKIKNILFFFVNYNIKSSKTQNTMLLFFRGLTLYIKHQFIQHLSYEPVWIIAILIRIILWCIVWLWAAGYMTRPPKNYKINAWNMKSIPPLYGYIECTFQWCGVLDYLFGLYFSNNKLKYIFSFFSLIDFITTPVSSFIMNFLWQNDYHQTYWFLILGPLRFLRLVRAESTMSSCFFWLSDVKIIIIGIIILSLAILFTFSGIMYILEAPDIERQFISPLDFVYFGVITMSTVGYGDYTPVTPAGKCLTMFIIVTCFTFVGAQLKRLKEAMFSPKTIMGIIPKPDDDYILILGPVSPIQLLYICKGINNSFPNSVESIFLFTPLPVIIYRYVYGSIIKNTNIKICINGGNECFICPSIIYDAVINARALYILNNVDSEKYTLLNQQIFLASNNFNFNNNDKNQRIRPEDILHNNIINKFTGDKKKTWKFTDIYSEHKNQINKNNMLNLEMNINVNDSHMIREKDDQECILRFIGTYNISNALIPITVQLSNNTYEELIKSMNVYNYISIEELKYALLAKSINCKGLFFLIINFFYKPKAVKSLKKYIIDLRLLMYNNILKKKNHKKINSTNIKIKTFNELSSSHSENKLSDTSSMINYKSKSRVNYKMVKGTKNEFIRNQNYNINSIYYANNDNMHNEQNNNINDDDDAFKMIGCENDDNFLYNSYRNTYGINNNIQHYKSNSSKSFYNNKKSGNYNEGNTSFSKTVGSMNSSQDVPSKNYYNILEKISLNMYYYLEGLKYNIYRFQFPECMRGFLFQTASEYLYQKHGAFLIGIITINKEIFLNPIDYIIGEENKYYYTSAFSGIILTTSLDNLIKLSSIKYISKKVSEYNQRRINERRKRYAKNTVSTDGENGYSKDLGFSEKNNNNYENIEKNKNIDKWQNSIISKQNTSIMHREDNKINKLDKSIEQNTNIYKINDKDNTDNNEDKNSKINKNNSNFKMEIISKKNKLILYNFVLGIYEVDNYVSAYRDIFDDKRKPLLLICGWPDNIHMLLKHLKINIYKTMKYKKKNRIQNGNDEYNNNNDKINRNYRSYGDRMKYNIIILSIHVPKFNYENDLLDFSNNTAFIRGSSMDSTNLIKGGIFYAKRIIILNSNHSLFVDKDAYRIDNEVIIIKNVIYQLYNNIFKNKKIYLEIIKKIFKKEYTDKYINEKIIFDTNIENNNKHDEFQNDSYTSNSDSENKMVNKQKNKINYNIFNVNKNPYIICLIKNSESLEYIDGSINLSYENYNDNEKMNKIWENCGEYIYTFELVSANIFVDEMLHNLVSFSLPISKYAIEYSVIYSLIGININEYSKNVNMFHKNLKLSTGHVLIIPIPSYFYKKPFYRCFFYLLHKKKYLCIGILRYINISPLRNISRKLFILSCPSRTMKIEHYDQAYVIAYNTV.

A run of 6 helical transmembrane segments spans residues 175-195, 598-618, 643-663, 670-690, 701-721, and 734-754; these read IIILYIIMLEFGSMLISYILL, VWIIAILIRIILWCIVWLWAA, GYIECTFQWCGVLDYLFGLYF, YIFSFFSLIDFITTPVSSFIM, TYWFLILGPLRFLRLVRAEST, and IIIIGIIILSLAILFTFSGIM. Positions 772-788 form an intramembrane region, pore-forming; sequence FVYFGVITMSTVGYGDY. The chain crosses the membrane as a helical span at residues 791-811; it reads VTPAGKCLTMFIIVTCFTFVG. A coiled-coil region spans residues 1141–1185; the sequence is DTSSMINYKSKSRVNYKMVKGTKNEFIRNQNYNINSIYYANNDNM.

The protein resides in the membrane. It carries out the reaction K(+)(in) = K(+)(out). Partially inhibited by Ba(2+) and quinine. Probably insensitive to tetraethylammonium (TEA). In terms of biological role, likely a predominant potassium channel in the erythrocytic stages of parasites. Mediates transmembrane potassium transport. Required for the development of oocysts in the mosquito midgut. This is Potassium channel K1 from Plasmodium berghei (strain Anka).